The chain runs to 227 residues: Cytochrome c oxidase subunit 2 (227 aa).

The Mitochondrial intermembrane segment spans residues 1 to 26; that stretch reads MATWSNLNLQNSSSPLMEQLIFFHDH. A helical membrane pass occupies residues 27 to 48; the sequence is TLMILLMITVLVAYIMSMLFFN. The Mitochondrial matrix portion of the chain corresponds to 49 to 62; sequence LYTNRFLLEGQTIE. The helical transmembrane segment at 63–82 threads the bilayer; the sequence is IIWTILPAITLIFIALPSLR. The Mitochondrial intermembrane segment spans residues 83–227; it reads LLYLLDESMD…FINWIKNYSS (145 aa). H160, C195, E197, C199, H203, and M206 together coordinate Cu cation. Residue E197 participates in Mg(2+) binding.

This sequence belongs to the cytochrome c oxidase subunit 2 family. In terms of assembly, component of the cytochrome c oxidase (complex IV, CIV), a multisubunit enzyme composed of a catalytic core of 3 subunits and several supernumerary subunits. The complex exists as a monomer or a dimer and forms supercomplexes (SCs) in the inner mitochondrial membrane with ubiquinol-cytochrome c oxidoreductase (cytochrome b-c1 complex, complex III, CIII). It depends on Cu cation as a cofactor.

It is found in the mitochondrion inner membrane. The enzyme catalyses 4 Fe(II)-[cytochrome c] + O2 + 8 H(+)(in) = 4 Fe(III)-[cytochrome c] + 2 H2O + 4 H(+)(out). Component of the cytochrome c oxidase, the last enzyme in the mitochondrial electron transport chain which drives oxidative phosphorylation. The respiratory chain contains 3 multisubunit complexes succinate dehydrogenase (complex II, CII), ubiquinol-cytochrome c oxidoreductase (cytochrome b-c1 complex, complex III, CIII) and cytochrome c oxidase (complex IV, CIV), that cooperate to transfer electrons derived from NADH and succinate to molecular oxygen, creating an electrochemical gradient over the inner membrane that drives transmembrane transport and the ATP synthase. Cytochrome c oxidase is the component of the respiratory chain that catalyzes the reduction of oxygen to water. Electrons originating from reduced cytochrome c in the intermembrane space (IMS) are transferred via the dinuclear copper A center (CU(A)) of subunit 2 and heme A of subunit 1 to the active site in subunit 1, a binuclear center (BNC) formed by heme A3 and copper B (CU(B)). The BNC reduces molecular oxygen to 2 water molecules using 4 electrons from cytochrome c in the IMS and 4 protons from the mitochondrial matrix. This is Cytochrome c oxidase subunit 2 (COII) from Acheta domesticus (House cricket).